The chain runs to 212 residues: Ribosomal RNA small subunit methyltransferase G (212 aa).

S-adenosyl-L-methionine contacts are provided by residues G73, 127–128, and R143; that span reads IE.

It belongs to the methyltransferase superfamily. RNA methyltransferase RsmG family.

It is found in the cytoplasm. The enzyme catalyses guanosine(527) in 16S rRNA + S-adenosyl-L-methionine = N(7)-methylguanosine(527) in 16S rRNA + S-adenosyl-L-homocysteine. In terms of biological role, specifically methylates the N7 position of guanine in position 527 of 16S rRNA. The polypeptide is Ribosomal RNA small subunit methyltransferase G (Methylobacterium nodulans (strain LMG 21967 / CNCM I-2342 / ORS 2060)).